A 526-amino-acid chain; its full sequence is Adenylosuccinate synthetase (526 aa).

GTP-binding positions include 102-108 and 130-132; these read GDEGKGK and GHT. Residue aspartate 103 is the Proton acceptor of the active site. Mg(2+) contacts are provided by aspartate 103 and glycine 130. IMP contacts are provided by residues 103 to 106, 128 to 131, threonine 219, arginine 233, asparagine 310, threonine 325, and arginine 392; these read DEGK and NAGH. Catalysis depends on histidine 131, which acts as the Proton donor. Residue 388–394 participates in substrate binding; sequence TTTGRTR. GTP is bound by residues arginine 394, 420 to 422, and 502 to 504; these read KVD and GVG.

The protein belongs to the adenylosuccinate synthetase family. In terms of assembly, homodimer. Requires Mg(2+) as cofactor.

It localises to the cytoplasm. It carries out the reaction IMP + L-aspartate + GTP = N(6)-(1,2-dicarboxyethyl)-AMP + GDP + phosphate + 2 H(+). Its pathway is purine metabolism; AMP biosynthesis via de novo pathway; AMP from IMP: step 1/2. Its function is as follows. Plays an important role in the de novo pathway and in the salvage pathway of purine nucleotide biosynthesis. Catalyzes the first committed step in the biosynthesis of AMP from IMP. In Phaeodactylum tricornutum (strain CCAP 1055/1), this protein is Adenylosuccinate synthetase.